We begin with the raw amino-acid sequence, 844 residues long: DNA mismatch repair protein MutS (844 aa).

ATP is bound at residue 602–609 (GPNMSGKS).

This sequence belongs to the DNA mismatch repair MutS family.

Its function is as follows. This protein is involved in the repair of mismatches in DNA. It is possible that it carries out the mismatch recognition step. This protein has a weak ATPase activity. The protein is DNA mismatch repair protein MutS of Streptococcus pneumoniae serotype 19F (strain G54).